A 512-amino-acid chain; its full sequence is Acid-sensing ion channel 2 (512 aa).

Residues 1-42 (MDLKESPSEGSLQPSSIQIFANTSTLHGIRHIFVYGPLTIRR) lie on the Cytoplasmic side of the membrane. 2 positions are modified to phosphoserine: S8 and S11. A helical transmembrane segment spans residues 43–64 (VLWAVAFVGSLGLLLVESSERV). Topologically, residues 65 to 424 (SYYFSYQHVT…ETIEQKKAYE (360 aa)) are extracellular. 6 cysteine pairs are disulfide-bonded: C92–C193, C289–C364, C307–C360, C311–C358, C320–C342, and C322–C334. N-linked (GlcNAc...) asparagine glycosylation is found at N365 and N392. A helical membrane pass occupies residues 425 to 439 (VAALLGDIGGQMGLF). The Cytoplasmic portion of the chain corresponds to 440 to 512 (IGASILTILE…TLGTLEEIAC (73 aa)). Positions 441–443 (GAS) match the GAS motif; ion selectivity filter motif.

It belongs to the amiloride-sensitive sodium channel (TC 1.A.6) family. ASIC2 subfamily. As to quaternary structure, can form homotrimers. Heterotrimer; forms functional heterotrimers producing channel with different properties. Forms heterotrimers with ASIC1; while ASIC1 determines current amplitude, ASIC2 influences the properties of the current. Forms heterotrimers with ASIC3; resulting in channels with distinct properties. Interacts with STOM; STOM regulates the gating of ASIC2-containing channels. Interacts with PICK1; promotes ASIC3 phosphorylation by PKC and activation of ASIC2/ASIC3 heterotrimers. As to expression, expressed in brain, cerebellum, trigeminal sensory ganglia and also detected in testis.

It localises to the cell membrane. The catalysed reaction is Na(+)(in) = Na(+)(out). It catalyses the reaction K(+)(in) = K(+)(out). The enzyme catalyses Li(+)(in) = Li(+)(out). Its activity is regulated as follows. Inhibited by the diuretic drug amiloride. Inhibited by gadolinium ions, the heterotrimer with ASIC3 being more sensitive. Heterotrimer composed of ASIC1 and ASIC2 are inhibited by the snake venom mambalgin-1. Forms pH-gated trimeric sodium channels that act as postsynaptic excitatory sensors in the nervous system. Upon extracellular acidification, these channels generate rapid, transient inward currents that fully desensitize. Highly selective for sodium, they are permeable to other cations. By forming heterotrimeric channels with ASIC1, could contribute to synaptic plasticity, learning, and memory. Additionally, as acid sensors at nerve terminals, plays a role in mechanosensation and phototransduction. In Homo sapiens (Human), this protein is Acid-sensing ion channel 2.